The primary structure comprises 231 residues: 7-cyano-7-deazaguanine synthase (231 aa).

17–27 serves as a coordination point for ATP; sequence FSGGMDSFTLL. Cys-193, Cys-201, Cys-204, and Cys-207 together coordinate Zn(2+).

Belongs to the QueC family. It depends on Zn(2+) as a cofactor.

The enzyme catalyses 7-carboxy-7-deazaguanine + NH4(+) + ATP = 7-cyano-7-deazaguanine + ADP + phosphate + H2O + H(+). Its pathway is purine metabolism; 7-cyano-7-deazaguanine biosynthesis. Its function is as follows. Catalyzes the ATP-dependent conversion of 7-carboxy-7-deazaguanine (CDG) to 7-cyano-7-deazaguanine (preQ(0)). The chain is 7-cyano-7-deazaguanine synthase from Hahella chejuensis (strain KCTC 2396).